The sequence spans 122 residues: High-potential iron-sulfur protein (122 aa).

Positions 1 to 37 are cleaved as a signal peptide; that stretch reads MSDKPISKSRRDAVKVMLGTAAAIPMINLVGFGTARA. 4 residues coordinate [4Fe-4S] cluster: cysteine 80, cysteine 83, cysteine 100, and cysteine 114.

Belongs to the high-potential iron-sulfur protein (HiPIP) family. Homodimer.

Its subcellular location is the periplasm. Specific class of high-redox-potential 4Fe-4S ferredoxins. Functions in anaerobic electron transport in most purple and in some other photosynthetic bacteria and in at least one genus (Paracoccus) of halophilic, denitrifying bacteria. The protein is High-potential iron-sulfur protein (hip) of Allochromatium vinosum (strain ATCC 17899 / DSM 180 / NBRC 103801 / NCIMB 10441 / D) (Chromatium vinosum).